An 82-amino-acid chain; its full sequence is MKHPLETLLSAAGILLLALLSCLLLPAPSLGLTLAQKLVETFHMMDLNQLYTVLFCLWFLALGAIEYLVLRWVWRRWFSLER.

Transmembrane regions (helical) follow at residues 8 to 28 and 50 to 70; these read LLSAAGILLLALLSCLLLPAP and LYTVLFCLWFLALGAIEYLVL.

The protein localises to the cell membrane. This is an uncharacterized protein from Klebsiella pneumoniae.